The sequence spans 672 residues: Acetoacetyl-CoA synthetase (672 aa).

This sequence belongs to the ATP-dependent AMP-binding enzyme family. In terms of tissue distribution, abundant in male subcutaneous white adipose tissue after weaning. In white adipose tissue, it is preferentially detected in mature adipocytes but not in preadipocytes. The expression in primary preadipocytes increases during the adipocyte differentiation. In brain, it is expressed in the midbrain, pons/medulla, cerebral cortex, hippocampus and cerebellum. The expression in the cerebellum is restricted primarily to glial cells, while in the cerebral cortex, it is restricted to neuronal cells.

It is found in the cytoplasm. The protein resides in the cytosol. It carries out the reaction acetoacetate + ATP + CoA = acetoacetyl-CoA + AMP + diphosphate. In terms of biological role, converts acetoacetate to acetoacetyl-CoA in the cytosol. Ketone body-utilizing enzyme, responsible for the synthesis of cholesterol and fatty acids. This Rattus norvegicus (Rat) protein is Acetoacetyl-CoA synthetase (Aacs).